A 284-amino-acid chain; its full sequence is Tryptophan 2,3-dioxygenase (284 aa).

Substrate-binding positions include 53 to 57 (FIIQH) and arginine 119. Heme is bound at residue histidine 242. Threonine 256 contacts substrate.

This sequence belongs to the tryptophan 2,3-dioxygenase family. In terms of assembly, homotetramer. Heme serves as cofactor.

The catalysed reaction is L-tryptophan + O2 = N-formyl-L-kynurenine. It functions in the pathway amino-acid degradation; L-tryptophan degradation via kynurenine pathway; L-kynurenine from L-tryptophan: step 1/2. The protein operates within siderophore biosynthesis; quinolobactin biosynthesis. Functionally, heme-dependent dioxygenase that catalyzes the oxidative cleavage of the L-tryptophan (L-Trp) pyrrole ring and converts L-tryptophan to N-formyl-L-kynurenine. Catalyzes the oxidative cleavage of the indole moiety. Required for synthesis of the siderophore quinolobactin. In Pseudomonas fluorescens, this protein is Tryptophan 2,3-dioxygenase.